Consider the following 470-residue polypeptide: tRNA (guanine(37)-N(1))-methyltransferase (470 aa).

Residues 304–305, 332–333, and Asn-370 contribute to the S-adenosyl-L-methionine site; these read DL and DG.

Belongs to the class I-like SAM-binding methyltransferase superfamily. TRM5/TYW2 family. As to quaternary structure, monomer.

It localises to the mitochondrion matrix. Its subcellular location is the nucleus. It is found in the cytoplasm. The catalysed reaction is guanosine(37) in tRNA + S-adenosyl-L-methionine = N(1)-methylguanosine(37) in tRNA + S-adenosyl-L-homocysteine + H(+). Specifically methylates the N1 position of guanosine-37 in various cytoplasmic and mitochondrial tRNAs. Methylation is not dependent on the nature of the nucleoside 5' of the target nucleoside. This is the first step in the biosynthesis of wybutosine (yW), a modified base adjacent to the anticodon of tRNAs and required for accurate decoding. The sequence is that of tRNA (guanine(37)-N(1))-methyltransferase from Theileria parva (East coast fever infection agent).